Reading from the N-terminus, the 149-residue chain is MNVFLSKYVNGVDKKSRVSVPANYRAVLGKELFNGVIAYPSIRNNCIEVCGISHIEKLRQMIETLDPYSEERDAFETMIFGEAVQLSFDGEGRVILPQSLMKHAGIEEQACFVGKGVIFEIWQPQNFEKYLNAAQKIAHEKRLTLRNAH.

SpoVT-AbrB domains lie at 7–54 (KYVN…GISH) and 83–126 (AVQL…QPQN).

This sequence belongs to the MraZ family. In terms of assembly, forms oligomers.

Its subcellular location is the cytoplasm. The protein localises to the nucleoid. In Rickettsia conorii (strain ATCC VR-613 / Malish 7), this protein is Transcriptional regulator MraZ.